We begin with the raw amino-acid sequence, 315 residues long: Probable cell division protein WhiA (315 aa).

Residues 280 to 313 (SLKELGDLLDPPLSKSGVAYRMRKLEESVKEILQ) constitute a DNA-binding region (H-T-H motif).

The protein belongs to the WhiA family.

Involved in cell division and chromosome segregation. In Syntrophomonas wolfei subsp. wolfei (strain DSM 2245B / Goettingen), this protein is Probable cell division protein WhiA.